The primary structure comprises 163 residues: UPF0478 protein SAB1599c (163 aa).

Residues 7 to 27 traverse the membrane as a helical segment; the sequence is IAGIIAAIAFLILCIGIVAVL.

The protein belongs to the UPF0478 family.

It is found in the cell membrane. This is UPF0478 protein SAB1599c from Staphylococcus aureus (strain bovine RF122 / ET3-1).